A 344-amino-acid chain; its full sequence is 4-hydroxy-3-methylbut-2-en-1-yl diphosphate synthase (flavodoxin) (344 aa).

Positions 253, 256, 288, and 295 each coordinate [4Fe-4S] cluster.

The protein belongs to the IspG family. It depends on [4Fe-4S] cluster as a cofactor.

The catalysed reaction is (2E)-4-hydroxy-3-methylbut-2-enyl diphosphate + oxidized [flavodoxin] + H2O + 2 H(+) = 2-C-methyl-D-erythritol 2,4-cyclic diphosphate + reduced [flavodoxin]. Its pathway is isoprenoid biosynthesis; isopentenyl diphosphate biosynthesis via DXP pathway; isopentenyl diphosphate from 1-deoxy-D-xylulose 5-phosphate: step 5/6. In terms of biological role, converts 2C-methyl-D-erythritol 2,4-cyclodiphosphate (ME-2,4cPP) into 1-hydroxy-2-methyl-2-(E)-butenyl 4-diphosphate. This chain is 4-hydroxy-3-methylbut-2-en-1-yl diphosphate synthase (flavodoxin), found in Thermotoga maritima (strain ATCC 43589 / DSM 3109 / JCM 10099 / NBRC 100826 / MSB8).